Reading from the N-terminus, the 430-residue chain is Paraneoplastic antigen-like protein 8A (430 aa).

A compositionally biased stretch (basic and acidic residues) spans 219 to 228; it reads WKNTEDHGDP. Disordered regions lie at residues 219–270, 313–364, and 392–430; these read WKNT…NSNY, DPSD…RKKK, and GLGA…SRKL. Basic residues predominate over residues 232–250; it reads LVRRPGGKIRSRRRKQKKN. A compositionally biased stretch (polar residues) spans 261-270; that stretch reads SQGSNYNSNY.

This sequence belongs to the PNMA family.

In Mus musculus (Mouse), this protein is Paraneoplastic antigen-like protein 8A.